The sequence spans 104 residues: Large ribosomal subunit protein uL24 (104 aa).

Belongs to the universal ribosomal protein uL24 family. In terms of assembly, part of the 50S ribosomal subunit.

Its function is as follows. One of two assembly initiator proteins, it binds directly to the 5'-end of the 23S rRNA, where it nucleates assembly of the 50S subunit. In terms of biological role, one of the proteins that surrounds the polypeptide exit tunnel on the outside of the subunit. The sequence is that of Large ribosomal subunit protein uL24 from Methylorubrum extorquens (strain PA1) (Methylobacterium extorquens).